Reading from the N-terminus, the 606-residue chain is Neutral/alkaline invertase 3, chloroplastic (606 aa).

The transit peptide at 1 to 58 (MGIAEVALHSMPGAFAAHSPASNLPLAADAARGRRRRSANSLHSSRALQGPVRFPGLR) directs the protein to the chloroplast. The tract at residues 97-126 (RVPGQAVGGNGSVNGSAAKPPPQRRKASSV) is disordered.

It belongs to the glycosyl hydrolase 100 family.

The protein localises to the plastid. It localises to the chloroplast. The catalysed reaction is Hydrolysis of terminal non-reducing beta-D-fructofuranoside residues in beta-D-fructofuranosides.. Mitochondrial invertase that cleaves sucrose into glucose and fructose. The polypeptide is Neutral/alkaline invertase 3, chloroplastic (Oryza sativa subsp. japonica (Rice)).